Reading from the N-terminus, the 107-residue chain is UPF0145 protein PM1668 (107 aa).

The protein belongs to the UPF0145 family.

This chain is UPF0145 protein PM1668, found in Pasteurella multocida (strain Pm70).